The following is a 165-amino-acid chain: Nascent polypeptide-associated complex subunit beta (165 aa).

An NAC-A/B domain is found at 33–97; that stretch reads TTDDKRLQST…PQTKKLQDIL (65 aa). Residues 120 to 165 form a disordered region; sequence QKQAPGAGDVPATIQEEDDDDDVPDLVVGETFETPATEEAPKAAAS. Positions 134 to 143 are enriched in acidic residues; the sequence is QEEDDDDDVP. A compositionally biased stretch (low complexity) spans 144–165; sequence DLVVGETFETPATEEAPKAAAS.

Belongs to the NAC-beta family. In terms of assembly, part of the nascent polypeptide-associated complex (NAC).

The protein is Nascent polypeptide-associated complex subunit beta of Arabidopsis thaliana (Mouse-ear cress).